The chain runs to 501 residues: Beta-glucosidase 25 (501 aa).

The signal sequence occupies residues 1–19 (MSLLTLVHILVSFSACVEA). Position 39 (Gln39) interacts with a beta-D-glucoside. Asn107 carries N-linked (GlcNAc...) asparagine glycosylation. Residues His140 and 185–186 (NE) contribute to the a beta-D-glucoside site. The active-site Proton donor is Glu186. A disulfide bridge connects residues Cys205 and Cys213. A beta-D-glucoside contacts are provided by residues Tyr329, Glu402, Trp452, 459-460 (EW), and Phe468. The Nucleophile role is filled by Glu402. Residue Asn478 is glycosylated (N-linked (GlcNAc...) asparagine).

It belongs to the glycosyl hydrolase 1 family.

The enzyme catalyses Hydrolysis of terminal, non-reducing beta-D-glucosyl residues with release of beta-D-glucose.. This chain is Beta-glucosidase 25 (BGLU25), found in Oryza sativa subsp. japonica (Rice).